The chain runs to 388 residues: Succinate--CoA ligase [ADP-forming] subunit beta (388 aa).

The 236-residue stretch at 9-244 folds into the ATP-grasp domain; it reads KSLFAEYGLP…PSQDDAREAH (236 aa). ATP is bound by residues Lys46, 53–55, Glu99, Thr102, and Glu107; that span reads GRG. 2 residues coordinate Mg(2+): Asn199 and Asp213. Substrate is bound by residues Asn264 and 321 to 323; that span reads GIV.

This sequence belongs to the succinate/malate CoA ligase beta subunit family. In terms of assembly, heterotetramer of two alpha and two beta subunits. Mg(2+) serves as cofactor.

The catalysed reaction is succinate + ATP + CoA = succinyl-CoA + ADP + phosphate. It carries out the reaction GTP + succinate + CoA = succinyl-CoA + GDP + phosphate. It functions in the pathway carbohydrate metabolism; tricarboxylic acid cycle; succinate from succinyl-CoA (ligase route): step 1/1. Functionally, succinyl-CoA synthetase functions in the citric acid cycle (TCA), coupling the hydrolysis of succinyl-CoA to the synthesis of either ATP or GTP and thus represents the only step of substrate-level phosphorylation in the TCA. The beta subunit provides nucleotide specificity of the enzyme and binds the substrate succinate, while the binding sites for coenzyme A and phosphate are found in the alpha subunit. In Shewanella oneidensis (strain ATCC 700550 / JCM 31522 / CIP 106686 / LMG 19005 / NCIMB 14063 / MR-1), this protein is Succinate--CoA ligase [ADP-forming] subunit beta.